Consider the following 248-residue polypeptide: Pulmonary surfactant-associated protein A (248 aa).

Residues 1 to 20 (MLLCSLTLTLILLAVSGTKC) form the signal peptide. The Collagen-like domain maps to 31–100 (GVPGIPGSPG…PGERGPPGPP (70 aa)). The segment at 34–105 (GIPGSPGLPG…PPGPPAYPDE (72 aa)) is disordered. Positions 54-65 (PGPPGPIGPPGG) are enriched in pro residues. Residues 84–93 (ERGDKGEPGE) show a composition bias toward basic and acidic residues. Positions 134–247 (VGEKVFSTNG…CLQYRLAICE (114 aa)) constitute a C-type lectin domain. Cystine bridges form between C155–C246 and C224–C238. An N-linked (GlcNAc...) asparagine glycan is attached at N207. E215, R217, N234, and D235 together coordinate Ca(2+).

The protein belongs to the SFTPA family. As to quaternary structure, oligomeric complex of 6 set of homotrimers.

It is found in the secreted. It localises to the extracellular space. The protein resides in the extracellular matrix. Its subcellular location is the surface film. Its function is as follows. In presence of calcium ions, it binds to surfactant phospholipids and contributes to lower the surface tension at the air-liquid interface in the alveoli of the mammalian lung and is essential for normal respiration. Enhances the expression of MYO18A/SP-R210 on alveolar macrophages. This chain is Pulmonary surfactant-associated protein A (SFTPA1), found in Equus caballus (Horse).